A 427-amino-acid polypeptide reads, in one-letter code: Serine--tRNA ligase (427 aa).

Residue 231-233 (TAE) participates in L-serine binding. Residues 262–264 (RRE) and V278 contribute to the ATP site. E285 contacts L-serine. Position 349 to 352 (349 to 352 (EVSS)) interacts with ATP. S384 lines the L-serine pocket.

The protein belongs to the class-II aminoacyl-tRNA synthetase family. Type-1 seryl-tRNA synthetase subfamily. As to quaternary structure, homodimer. The tRNA molecule binds across the dimer.

The protein localises to the cytoplasm. It catalyses the reaction tRNA(Ser) + L-serine + ATP = L-seryl-tRNA(Ser) + AMP + diphosphate + H(+). It carries out the reaction tRNA(Sec) + L-serine + ATP = L-seryl-tRNA(Sec) + AMP + diphosphate + H(+). Its pathway is aminoacyl-tRNA biosynthesis; selenocysteinyl-tRNA(Sec) biosynthesis; L-seryl-tRNA(Sec) from L-serine and tRNA(Sec): step 1/1. Catalyzes the attachment of serine to tRNA(Ser). Is also able to aminoacylate tRNA(Sec) with serine, to form the misacylated tRNA L-seryl-tRNA(Sec), which will be further converted into selenocysteinyl-tRNA(Sec). The chain is Serine--tRNA ligase from Chlamydia pneumoniae (Chlamydophila pneumoniae).